Consider the following 247-residue polypeptide: ATP synthase subunit a, chloroplastic (247 aa).

5 helical membrane passes run 38 to 58, 95 to 115, 134 to 154, 199 to 219, and 220 to 240; these read QVLITSWVVIAILLGSAAIAV, VPFIGTMFLFIFVSNWSGALL, INTTVALALLTSVAYFYAGLT, LVVVVLVSLVPLVVPIPVMFL, and GLFTSGIQALIFATLAAAYIG.

Belongs to the ATPase A chain family. In terms of assembly, F-type ATPases have 2 components, CF(1) - the catalytic core - and CF(0) - the membrane proton channel. CF(1) has five subunits: alpha(3), beta(3), gamma(1), delta(1), epsilon(1). CF(0) has four main subunits: a, b, b' and c.

It localises to the plastid. Its subcellular location is the chloroplast thylakoid membrane. Functionally, key component of the proton channel; it plays a direct role in the translocation of protons across the membrane. This Calycanthus floridus var. glaucus (Eastern sweetshrub) protein is ATP synthase subunit a, chloroplastic.